We begin with the raw amino-acid sequence, 423 residues long: Glycine amidinotransferase, mitochondrial (423 aa).

Residues 1–43 (MLRVRCLRGGSRGAEAVHYIGSRLGGSLTGWVQRTFQSTQAAT) constitute a mitochondrion transit peptide. Phosphoserine occurs at positions 46 and 49. An arginine-binding site is contributed by Asp170. Residues Asp254 and His303 contribute to the active site. Arginine contacts are provided by Asp305, Arg322, Ser354, and Ser355. Lys385 is subject to N6-acetyllysine. Catalysis depends on Cys407, which acts as the Amidino-cysteine intermediate.

It belongs to the amidinotransferase family. As to quaternary structure, homodimer. As to expression, expressed in kidney, brain, gonads, uterus, and embryonic head, chest and abdomen. Maternally expressed in the placenta and yolk sac of embryos.

The protein localises to the mitochondrion inner membrane. It catalyses the reaction L-arginine + glycine = guanidinoacetate + L-ornithine. The catalysed reaction is 4-aminobutanoate + L-arginine = 4-guanidinobutanoate + L-ornithine. The enzyme catalyses beta-alanine + L-arginine = 3-guanidinopropanoate + L-ornithine. It carries out the reaction taurine + L-arginine = taurocyamine + L-ornithine. Its pathway is amine and polyamine biosynthesis; creatine biosynthesis; creatine from L-arginine and glycine: step 1/2. Transamidinase that catalyzes the transfer of the amidino group of L-arginine onto the amino moiety of acceptor metabolites such as glycine, beta-alanine, gamma-aminobutyric acid (GABA) and taurine yielding the corresponding guanidine derivatives. Catalyzes the rate-limiting step of creatine biosynthesis, namely the transfer of the amidino group from L-arginine to glycine to generate guanidinoacetate, which is then methylated by GAMT to form creatine. Provides creatine as a source for ATP generation in tissues with high energy demands, in particular skeletal muscle, heart and brain. The chain is Glycine amidinotransferase, mitochondrial (Gatm) from Mus musculus (Mouse).